A 132-amino-acid chain; its full sequence is DNA-entry nuclease inhibitor (132 aa).

As to quaternary structure, this protein is a subunit of a 75 kDa protein complex, which governs binding and entry of donor DNA. The complex is a tetramer of two subunits of the DNA-entry nuclease and two subunits of a competence-specific protein. Only the complex is able to bind ds- and ss-DNA.

Its subcellular location is the cell membrane. Functionally, plays a role in the competence of cells to be transformed. It inhibits the activity of the DNA-entry nuclease. This is DNA-entry nuclease inhibitor (nin) from Bacillus subtilis (strain 168).